Reading from the N-terminus, the 143-residue chain is UPF0201 protein Pcal_0593 (143 aa).

The protein belongs to the UPF0201 family.

This Pyrobaculum calidifontis (strain DSM 21063 / JCM 11548 / VA1) protein is UPF0201 protein Pcal_0593.